The sequence spans 344 residues: Microcin C7 self-immunity protein MccF (344 aa).

This sequence belongs to the peptidase S66 family.

In terms of biological role, involved in specific self-immunity to microcin C7. The protein is Microcin C7 self-immunity protein MccF (mccF) of Escherichia coli.